The primary structure comprises 545 residues: Bifunctional purine biosynthesis protein PurH (545 aa).

An MGS-like domain is found at 1 to 150 (MTNTNRPIRR…KNHATVAIVT (150 aa)).

Belongs to the PurH family.

The enzyme catalyses (6R)-10-formyltetrahydrofolate + 5-amino-1-(5-phospho-beta-D-ribosyl)imidazole-4-carboxamide = 5-formamido-1-(5-phospho-D-ribosyl)imidazole-4-carboxamide + (6S)-5,6,7,8-tetrahydrofolate. The catalysed reaction is IMP + H2O = 5-formamido-1-(5-phospho-D-ribosyl)imidazole-4-carboxamide. Its pathway is purine metabolism; IMP biosynthesis via de novo pathway; 5-formamido-1-(5-phospho-D-ribosyl)imidazole-4-carboxamide from 5-amino-1-(5-phospho-D-ribosyl)imidazole-4-carboxamide (10-formyl THF route): step 1/1. It functions in the pathway purine metabolism; IMP biosynthesis via de novo pathway; IMP from 5-formamido-1-(5-phospho-D-ribosyl)imidazole-4-carboxamide: step 1/1. In Bifidobacterium longum (strain NCC 2705), this protein is Bifunctional purine biosynthesis protein PurH.